Here is a 318-residue protein sequence, read N- to C-terminus: Ribosomal RNA small subunit methyltransferase H (318 aa).

S-adenosyl-L-methionine is bound by residues 35 to 37 (AGH), aspartate 55, phenylalanine 84, aspartate 105, and glutamine 112. A disordered region spans residues 294-318 (SDSELSENNRSRSAKLRIAEKIKSR).

The protein belongs to the methyltransferase superfamily. RsmH family.

It localises to the cytoplasm. The catalysed reaction is cytidine(1402) in 16S rRNA + S-adenosyl-L-methionine = N(4)-methylcytidine(1402) in 16S rRNA + S-adenosyl-L-homocysteine + H(+). Specifically methylates the N4 position of cytidine in position 1402 (C1402) of 16S rRNA. The polypeptide is Ribosomal RNA small subunit methyltransferase H (Enterococcus faecalis (strain ATCC 700802 / V583)).